Reading from the N-terminus, the 3933-residue chain is Protein DOP1 homolog PFC0245c (3933 aa).

4 helical membrane-spanning segments follow: residues 70–90, 98–118, 140–160, and 163–183; these read LNPL…SSIF, FINN…HCTI, IFAY…NNIL, and IYSI…WLLL. Disordered regions lie at residues 468-494, 543-600, and 614-656; these read RLNN…KYQG, ININ…NMLH, and KKIN…SSSS. Residues 470–486 show a composition bias toward low complexity; the sequence is NNNNNNNNNNNNNNNNN. The segment covering 546-561 has biased composition (acidic residues); that stretch reads NDDDNLNYDDNEDDEY. Low complexity-rich tracts occupy residues 563–576 and 585–597; these read NYHN…NYFN and ENNN…NNNN. Residues 620 to 651 adopt a coiled-coil conformation; it reads GQTNNYDDDEEEEDEEEEDNNNNTSYNNNNNN. The span at 625-639 shows a compositional bias: acidic residues; it reads YDDDEEEEDEEEEDN. Positions 640-656 are enriched in low complexity; that stretch reads NNNTSYNNNNNNSSSSS. 3 consecutive transmembrane segments (helical) span residues 782–802, 842–862, and 1186–1206; these read MLNL…YTFY, YLYI…MNFL, and FYFW…KSLL. Over residues 1216–1255 the composition is skewed to acidic residues; it reads DDTDDDDDDDDDDDDEEEDDDDEDDDDEDDEEEDDEEDLG. Disordered regions lie at residues 1216–1284 and 1361–1405; these read DDTD…MNKK and TNNN…NNFN. The span at 1263–1284 shows a compositional bias: basic residues; it reads SSKKGKKKKKKSVHKNKLMNKK. The stretch at 1349–1403 forms a coiled coil; the sequence is ELNKMKYMNEDITNNNNNINNNSNNNNNNKNNINNNNNNNNNNNNNNNNLNNLNN. A compositionally biased stretch (low complexity) spans 1362–1405; it reads NNNNNINNNSNNNNNNKNNINNNNNNNNNNNNNNNNLNNLNNFN. The next 2 membrane-spanning stretches (helical) occupy residues 1462–1482 and 1997–2017; these read FIKL…MFCL and KNIF…KLIY. The segment at 2691–2739 is disordered; sequence HRRKMNRQNIRTDSSNNNNNNNINSNNNNNNNNNNNNNNNNNNNNNIYN. Residues 2704-2739 are compositionally biased toward low complexity; it reads SSNNNNNNNINSNNNNNNNNNNNNNNNNNNNNNIYN. 5 helical membrane passes run 2860-2880, 2905-2925, 3017-3037, 3200-3220, and 3276-3296; these read INLN…CTLT, IMSS…HIYV, YSEI…YHTV, ILIL…YIII, and IIIN…SWIF. Residues 3620 to 3646 are disordered; the sequence is LKNEKSTRTYNSSLQEGSDYDEEEDEE. Residues 3637–3646 are compositionally biased toward acidic residues; it reads SDYDEEEDEE. A coiled-coil region spans residues 3897 to 3925; that stretch reads KEETIILLKELNSVENDINDLFLEVDLNE.

The protein belongs to the DOP1 family.

It is found in the membrane. May be involved in protein traffic between late Golgi and early endosomes. The sequence is that of Protein DOP1 homolog PFC0245c from Plasmodium falciparum (isolate 3D7).